A 175-amino-acid polypeptide reads, in one-letter code: Large ribosomal subunit protein uL10 (175 aa).

It belongs to the universal ribosomal protein uL10 family. Part of the ribosomal stalk of the 50S ribosomal subunit. The N-terminus interacts with L11 and the large rRNA to form the base of the stalk. The C-terminus forms an elongated spine to which L12 dimers bind in a sequential fashion forming a multimeric L10(L12)X complex.

Functionally, forms part of the ribosomal stalk, playing a central role in the interaction of the ribosome with GTP-bound translation factors. The chain is Large ribosomal subunit protein uL10 from Alkalilimnicola ehrlichii (strain ATCC BAA-1101 / DSM 17681 / MLHE-1).